Consider the following 552-residue polypeptide: CTP synthase (552 aa).

The segment at 1–270 is amidoligase domain; it reads MTKFVFVTGG…DGLICDKLRL (270 aa). Residue Ser-13 coordinates CTP. Ser-13 serves as a coordination point for UTP. Residues 14–19 and Asp-71 each bind ATP; that span reads SLGKGI. Positions 71 and 144 each coordinate Mg(2+). Residues 151–153, 191–196, and Lys-227 contribute to the CTP site; these read DIE and KTKPTQ. Residues 191–196 and Lys-227 contribute to the UTP site; that span reads KTKPTQ. In terms of domain architecture, Glutamine amidotransferase type-1 spans 295–548; the sequence is QIAMVGKYVE…IKAAVEHQKP (254 aa). An L-glutamine-binding site is contributed by Gly-357. Residue Cys-384 is the Nucleophile; for glutamine hydrolysis of the active site. L-glutamine contacts are provided by residues 385–388, Glu-408, and Arg-474; that span reads LGMQ. Catalysis depends on residues His-521 and Glu-523.

This sequence belongs to the CTP synthase family. Homotetramer.

The enzyme catalyses UTP + L-glutamine + ATP + H2O = CTP + L-glutamate + ADP + phosphate + 2 H(+). It catalyses the reaction L-glutamine + H2O = L-glutamate + NH4(+). The catalysed reaction is UTP + NH4(+) + ATP = CTP + ADP + phosphate + 2 H(+). The protein operates within pyrimidine metabolism; CTP biosynthesis via de novo pathway; CTP from UDP: step 2/2. Allosterically activated by GTP, when glutamine is the substrate; GTP has no effect on the reaction when ammonia is the substrate. The allosteric effector GTP functions by stabilizing the protein conformation that binds the tetrahedral intermediate(s) formed during glutamine hydrolysis. Inhibited by the product CTP, via allosteric rather than competitive inhibition. Its function is as follows. Catalyzes the ATP-dependent amination of UTP to CTP with either L-glutamine or ammonia as the source of nitrogen. Regulates intracellular CTP levels through interactions with the four ribonucleotide triphosphates. This is CTP synthase from Acidovorax ebreus (strain TPSY) (Diaphorobacter sp. (strain TPSY)).